The sequence spans 476 residues: Fatty acid hydroperoxide lyase, chloroplastic (476 aa).

A helical transmembrane segment spans residues 280–300; the sequence is LLFILGFNAFGGFSIFLPTLL. Cys-438 contributes to the heme binding site.

This sequence belongs to the cytochrome P450 family. Heme serves as cofactor. As to expression, highly expressed in developing flowers and in young leaves. Detected in stems and immature green fruits, but not in mature green and red fruits.

It localises to the plastid. The protein resides in the chloroplast outer membrane. With respect to regulation, reversibly inhibited by nordihydroguaiaretic acid (NDGA) and irreversibly by salicylic acid. In terms of biological role, cytochrome P450 of the CYP74B subfamily involved in the biosynthesis of traumatin and C6 aldehydes. Metabolizes 13- but not 9-hydroperoxides of linoleic and linolenic acids. Can use 15S-hydroperoxy-11(Z),13(E),17(Z)-eicosatrienoic acid (15-HPET) and 13S-hydroperoxy-9(Z),11(E),15(Z)-octadecatrienoic acid (13-HPOT) as substrates, but only 5% activity with 13S-hydroperoxy-9(Z),11(E)-octadecadienoic acid (13-HPOD). Produces n-hexanal and 12-oxo-9(Z)-dodecanoic acid from 13-HPOD. The chain is Fatty acid hydroperoxide lyase, chloroplastic from Solanum lycopersicum (Tomato).